The sequence spans 483 residues: Glutamate--tRNA ligase (483 aa).

Positions 11-21 (PSPTGLLHIGN) match the 'HIGH' region motif. The 'KMSKS' region signature appears at 255 to 259 (KLSKR). Lysine 258 serves as a coordination point for ATP.

Belongs to the class-I aminoacyl-tRNA synthetase family. Glutamate--tRNA ligase type 1 subfamily. As to quaternary structure, monomer.

Its subcellular location is the cytoplasm. The enzyme catalyses tRNA(Glu) + L-glutamate + ATP = L-glutamyl-tRNA(Glu) + AMP + diphosphate. Catalyzes the attachment of glutamate to tRNA(Glu) in a two-step reaction: glutamate is first activated by ATP to form Glu-AMP and then transferred to the acceptor end of tRNA(Glu). The protein is Glutamate--tRNA ligase of Lactococcus lactis subsp. lactis (strain IL1403) (Streptococcus lactis).